A 254-amino-acid chain; its full sequence is MTSPASSRTILVFDVDGTLTAARQTITPEMREFLIEARKRVPLAIVGGSDFKKITEQLADHDKDLLLSLFDYTFSENGLYGFKGTEPYPVQSIQKAIGDAKLQELINFALRYMSDIQLPVKRGNFVEFRNGMINLSPIGRSCSQEERMQFVEFDKKHGIRQKFTEQLREKFGQYGLQFAIGGQISVDVFPTGWDKTFCLQYLVPDFDTIHFFGDKTAPGGNDHEIFADERTVGHTVEGPEDTRKHVENVLKELD.

The Nucleophile role is filled by Asp14. 2 residues coordinate Mg(2+): Asp14 and Asp16. The Proton donor/acceptor role is filled by Asp16. Residues Arg23, Arg129, Arg140, Arg147, Ser185, and Asp187 each contribute to the alpha-D-mannose 1-phosphate site. Mg(2+)-binding residues include Asp214, Phe226, Asp228, and Thr231.

Belongs to the eukaryotic PMM family. Homodimer.

Its subcellular location is the cytoplasm. The enzyme catalyses alpha-D-mannose 1-phosphate = D-mannose 6-phosphate. It participates in nucleotide-sugar biosynthesis; GDP-alpha-D-mannose biosynthesis; alpha-D-mannose 1-phosphate from D-fructose 6-phosphate: step 2/2. Involved in the synthesis of the GDP-mannose and dolichol-phosphate-mannose required for a number of critical mannosyl transfer reactions. This Caenorhabditis elegans protein is Probable phosphomannomutase.